The chain runs to 263 residues: Stress-response A/B barrel domain-containing protein UP3 (263 aa).

2 consecutive Stress-response A/B barrel domains span residues 49–142 (IEHI…AVDW) and 158–252 (VAKL…VVEF). The Peroxisomal targeting signal motif lies at 261–263 (SSL).

In terms of assembly, homodimer.

Its subcellular location is the peroxisome. Involved in stress response. The sequence is that of Stress-response A/B barrel domain-containing protein UP3 from Arabidopsis thaliana (Mouse-ear cress).